Reading from the N-terminus, the 1306-residue chain is Contactin-associated protein-like 5 (1306 aa).

The signal sequence occupies residues 1-24 (MDSLPRLTSVLTLLFSGLWHLGLT). The Extracellular portion of the chain corresponds to 25–1237 (ATNYNCDDPL…PLTNAVRSDS (1213 aa)). Positions 30 to 174 (CDDPLASLLS…IGMRVEVYGC (145 aa)) constitute an F5/8 type C domain. An intrachain disulfide couples Cys30 to Cys174. 2 Laminin G-like domains span residues 180–360 (VADF…TFSC) and 367–544 (PITF…IDLC). N-linked (GlcNAc...) asparagine glycosylation is found at Asn282, Asn355, and Asn496. Cys329 and Cys360 are oxidised to a cystine. 3 disulfides stabilise this stretch: Cys512/Cys544, Cys550/Cys561, and Cys555/Cys570. An EGF-like 1 domain is found at 546–583 (IKDRCLPNYCEHGGSCSQSWTTFYCNCSDTSYTGATCH). The N-linked (GlcNAc...) asparagine glycan is linked to Asn571. Cys572 and Cys582 are joined by a disulfide. A Fibrinogen C-terminal domain is found at 584–790 (NSIYEQSCEV…LRCYGDRRFW (207 aa)). The N-linked (GlcNAc...) asparagine glycan is linked to Asn622. Residues 791-956 (NAVSFYTEAS…KVTSGVRPGC (166 aa)) enclose the Laminin G-like 3 domain. 5 cysteine pairs are disulfide-bonded: Cys929–Cys956, Cys960–Cys973, Cys967–Cys982, Cys984–Cys994, and Cys1164–Cys1199. Positions 957-995 (PGHCSSYGSICHNGGKCVEKHNGYLCDCTNSPYEGPFCK) constitute an EGF-like 2 domain. The Laminin G-like 4 domain maps to 1013-1199 (QEPYPVTKNI…VHGTLTESSC (187 aa)). The helical transmembrane segment at 1238-1258 (AVIGGVIAVVIFIIFCIIGIM) threads the bilayer. Over 1259-1306 (TRFLYQHKQSHRTSQMKEKEYPENLDSSFRNEIDLQNTVSECKREYFI) the chain is Cytoplasmic.

The protein belongs to the neurexin family.

The protein localises to the membrane. Functionally, may play a role in the correct development and proper functioning of the peripheral and central nervous system and be involved in cell adhesion and intercellular communication. In Homo sapiens (Human), this protein is Contactin-associated protein-like 5 (CNTNAP5).